We begin with the raw amino-acid sequence, 492 residues long: Trypanothione reductase (492 aa).

35–52 lines the FAD pocket; that stretch reads DVQTVHGPPFFAALGGTC. The cysteines at positions 52 and 57 are disulfide-linked. The Proton acceptor role is filled by His-461.

It belongs to the class-I pyridine nucleotide-disulfide oxidoreductase family. Homodimer. The cofactor is FAD.

The protein resides in the cytoplasm. It carries out the reaction trypanothione + NADP(+) = trypanothione disulfide + NADPH + H(+). Trypanothione is the parasite analog of glutathione; this enzyme is the equivalent of glutathione reductase. The sequence is that of Trypanothione reductase (TPR) from Trypanosoma congolense.